The sequence spans 611 residues: Guanylate-binding protein 6 (611 aa).

The segment at 1 to 308 is GTPase domain (Globular); sequence MTQPQMAPIC…NAINSGAVPC (308 aa). The region spanning 33–275 is the GB1/RHD3-type G domain; sequence SQPVVVVAIV…FVSYIFTYAK (243 aa). GTP-binding positions include 43–50, 65–67, and 95–99; these read GLYRTGKS, LGS, and DTEGL.

The protein belongs to the TRAFAC class dynamin-like GTPase superfamily. GB1/RHD3 GTPase family. GB1 subfamily.

It localises to the cytoplasmic vesicle. It catalyses the reaction GTP + H2O = GDP + phosphate + H(+). Its function is as follows. Interferon (IFN)-inducible GTPase that plays important roles in innate immunity against a diverse range of bacterial, viral and protozoan pathogens, such as bacterial pathogens Listeria monocytogenes and Mycobacterium bovis BCG as well as the protozoan pathogen Toxoplasma gondii. Confers protection to several pathogens, including the bacterial pathogens Listeria monocytogenes and Mycobacterium bovis BCG as well as the protozoan pathogen Toxoplasma gondii. This is Guanylate-binding protein 6 (Gbp6) from Mus musculus (Mouse).